A 156-amino-acid chain; its full sequence is Deoxyuridine 5'-triphosphate nucleotidohydrolase (156 aa).

Substrate is bound by residues 76-78 (RSG), Asn-89, 93-95 (TVD), and Lys-103.

Belongs to the dUTPase family. The cofactor is Mg(2+).

The catalysed reaction is dUTP + H2O = dUMP + diphosphate + H(+). The protein operates within pyrimidine metabolism; dUMP biosynthesis; dUMP from dCTP (dUTP route): step 2/2. Functionally, this enzyme is involved in nucleotide metabolism: it produces dUMP, the immediate precursor of thymidine nucleotides and it decreases the intracellular concentration of dUTP so that uracil cannot be incorporated into DNA. The chain is Deoxyuridine 5'-triphosphate nucleotidohydrolase from Agrobacterium fabrum (strain C58 / ATCC 33970) (Agrobacterium tumefaciens (strain C58)).